Consider the following 240-residue polypeptide: Ribonuclease HII (240 aa).

An RNase H type-2 domain is found at 31–222 (RLIAGVDEAG…VRRALGLETA (192 aa)). A divalent metal cation-binding residues include Asp-37, Glu-38, and Asp-130.

Belongs to the RNase HII family. It depends on Mn(2+) as a cofactor. Mg(2+) serves as cofactor.

The protein localises to the cytoplasm. The catalysed reaction is Endonucleolytic cleavage to 5'-phosphomonoester.. Functionally, endonuclease that specifically degrades the RNA of RNA-DNA hybrids. This is Ribonuclease HII from Xanthomonas campestris pv. campestris (strain B100).